The following is a 433-amino-acid chain: MNRDTSPDLHYLSGFGNEFASEALPGALPVGQNSPQKAPYGLYAELLSGTAFTMARSELRRTWLYRIRPSALHPRFERLARQPLGGPLGGINPNRLRWSPQPIPAEPTDFIEGWLPMAANAAAEKPAGVSIYIYCANRSMERVFFNADGELLLVPEQGRLRIATELGVMEVEPLEIAVIPRGMKFRVELLDGQARGYIAENHGAPLRLPDLGPIGSNGLANPRDFLTPVAHYEEAEGPVQLVQKFLGEHWACELQHSPLDVVAWHGSNVPYKYDLRRFNTIGTVSFDHPDPSIFTVLTSPTSVHGMANMDFVIFPPRWMVAENTFRPPWFHRNLMNEFMGLINGAYDAKAEGFLPGGASLHGVMSAHGPDAETCEKAIAADLAPHKIDNTMAFMFETSQVLRPSLQALECPQLQADYDSCWATLPSTFNPNRR.

Histidine 288 functions as the Proton acceptor in the catalytic mechanism. Residues histidine 331 and glutamate 337 each coordinate Fe cation. Tyrosine 346 and histidine 367 together coordinate homogentisate. Residue histidine 367 coordinates Fe cation.

It belongs to the homogentisate dioxygenase family. As to quaternary structure, hexamer; dimer of trimers. Requires Fe cation as cofactor.

It catalyses the reaction homogentisate + O2 = 4-maleylacetoacetate + H(+). It functions in the pathway amino-acid degradation; L-phenylalanine degradation; acetoacetate and fumarate from L-phenylalanine: step 4/6. Its function is as follows. Involved in the catabolism of homogentisate (2,5-dihydroxyphenylacetate or 2,5-OH-PhAc), a central intermediate in the degradation of phenylalanine and tyrosine. Catalyzes the oxidative ring cleavage of the aromatic ring of homogentisate to yield maleylacetoacetate. In Pseudomonas putida (strain ATCC 700007 / DSM 6899 / JCM 31910 / BCRC 17059 / LMG 24140 / F1), this protein is Homogentisate 1,2-dioxygenase.